Consider the following 173-residue polypeptide: Small ribosomal subunit protein uS5 (173 aa).

The 64-residue stretch at 16-79 (LSELLVSVRR…NAAKKNMIRV (64 aa)) folds into the S5 DRBM domain.

The protein belongs to the universal ribosomal protein uS5 family. In terms of assembly, part of the 30S ribosomal subunit. Contacts proteins S4 and S8.

In terms of biological role, with S4 and S12 plays an important role in translational accuracy. Functionally, located at the back of the 30S subunit body where it stabilizes the conformation of the head with respect to the body. The polypeptide is Small ribosomal subunit protein uS5 (Anaplasma phagocytophilum (strain HZ)).